Reading from the N-terminus, the 329-residue chain is DNA-directed RNA polymerase subunit alpha (329 aa).

Residues 1–235 (MQGSVTEFLK…EQLDAFVDLR (235 aa)) are alpha N-terminal domain (alpha-NTD). The alpha C-terminal domain (alpha-CTD) stretch occupies residues 249–329 (FDPILLRPVD…NWPPASIAED (81 aa)).

Belongs to the RNA polymerase alpha chain family. In terms of assembly, homodimer. The RNAP catalytic core consists of 2 alpha, 1 beta, 1 beta' and 1 omega subunit. When a sigma factor is associated with the core the holoenzyme is formed, which can initiate transcription.

It catalyses the reaction RNA(n) + a ribonucleoside 5'-triphosphate = RNA(n+1) + diphosphate. DNA-dependent RNA polymerase catalyzes the transcription of DNA into RNA using the four ribonucleoside triphosphates as substrates. This Photobacterium profundum (strain SS9) protein is DNA-directed RNA polymerase subunit alpha.